Consider the following 835-residue polypeptide: Phenylalanine--tRNA ligase beta subunit (835 aa).

One can recognise a tRNA-binding domain in the interval 44–158 (GPVDGPLTVG…LPGADGADVL (115 aa)). The 80-residue stretch at 414–493 (WSLPPIRIAV…RLEGLEVIRS (80 aa)) folds into the B5 domain. Residues Asp471, Asp477, Glu480, and Glu481 each contribute to the Mg(2+) site. The FDX-ACB domain maps to 741–834 (SPFPAVLQDV…AAERVGATLR (94 aa)).

This sequence belongs to the phenylalanyl-tRNA synthetase beta subunit family. Type 1 subfamily. As to quaternary structure, tetramer of two alpha and two beta subunits. It depends on Mg(2+) as a cofactor.

The protein resides in the cytoplasm. It catalyses the reaction tRNA(Phe) + L-phenylalanine + ATP = L-phenylalanyl-tRNA(Phe) + AMP + diphosphate + H(+). The polypeptide is Phenylalanine--tRNA ligase beta subunit (Mycobacterium leprae (strain TN)).